The primary structure comprises 329 residues: Peroxidase 30 (329 aa).

The first 27 residues, Met-1 to Ala-27, serve as a signal peptide directing secretion. Disulfide bonds link Cys-38–Cys-116, Cys-71–Cys-76, Cys-122–Cys-324, and Cys-201–Cys-234. Residue His-69 is the Proton acceptor of the active site. Ca(2+)-binding residues include Asp-70, Val-73, Gly-75, Asp-77, and Ser-79. Asn-83 and Asn-155 each carry an N-linked (GlcNAc...) asparagine glycan. The segment at Ser-141–Pro-165 is disordered. Positions Lys-156–Pro-165 are enriched in polar residues. Residue Pro-164 participates in substrate binding. N-linked (GlcNAc...) asparagine glycosylation occurs at Asn-169. His-194 provides a ligand contact to heme b. A Ca(2+)-binding site is contributed by Thr-195. 2 N-linked (GlcNAc...) asparagine glycosylation sites follow: Asn-210 and Asn-240. Residues Asp-247, Ser-250, and Asp-255 each coordinate Ca(2+). A glycan (N-linked (GlcNAc...) asparagine) is linked at Asn-290.

It belongs to the peroxidase family. Classical plant (class III) peroxidase subfamily. Requires heme b as cofactor. Ca(2+) serves as cofactor. Mainly expressed in roots.

The protein resides in the secreted. It catalyses the reaction 2 a phenolic donor + H2O2 = 2 a phenolic radical donor + 2 H2O. In terms of biological role, removal of H(2)O(2), oxidation of toxic reductants, biosynthesis and degradation of lignin, suberization, auxin catabolism, response to environmental stresses such as wounding, pathogen attack and oxidative stress. These functions might be dependent on each isozyme/isoform in each plant tissue. The protein is Peroxidase 30 (PER30) of Arabidopsis thaliana (Mouse-ear cress).